The chain runs to 88 residues: Cytochrome c oxidase subunit 6B2 (88 aa).

Residues 1–21 (MLGVQAQMPAPGQWTTPPFDP) are disordered. The region spanning 29–75 (TRNCYQNFLDYHRCVKTMDRRGKNTQACDYYFRVFHSLCPVSWVQRW) is the CHCH domain. Positions 32-42 (CYQNFLDYHRC) match the Cx9C motif motif. Intrachain disulfides connect Cys-32–Cys-67 and Cys-42–Cys-56. Positions 56–67 (CDYYFRVFHSLC) match the Cx10C motif motif.

It belongs to the cytochrome c oxidase subunit 6B family. As to quaternary structure, component of the cytochrome c oxidase (complex IV, CIV), a multisubunit enzyme composed of 14 subunits. The complex is composed of a catalytic core of 3 subunits MT-CO1, MT-CO2 and MT-CO3, encoded in the mitochondrial DNA, and 11 supernumerary subunits COX4I, COX5A, COX5B, COX6A, COX6B, COX6C, COX7A, COX7B, COX7C, COX8 and NDUFA4, which are encoded in the nuclear genome. The complex exists as a monomer or a dimer and forms supercomplexes (SCs) in the inner mitochondrial membrane with NADH-ubiquinone oxidoreductase (complex I, CI) and ubiquinol-cytochrome c oxidoreductase (cytochrome b-c1 complex, complex III, CIII), resulting in different assemblies (supercomplex SCI(1)III(2)IV(1) and megacomplex MCI(2)III(2)IV(2)). As to expression, testis specific.

Its subcellular location is the mitochondrion inner membrane. It functions in the pathway energy metabolism; oxidative phosphorylation. Its function is as follows. Component of the cytochrome c oxidase, the last enzyme in the mitochondrial electron transport chain which drives oxidative phosphorylation. The respiratory chain contains 3 multisubunit complexes succinate dehydrogenase (complex II, CII), ubiquinol-cytochrome c oxidoreductase (cytochrome b-c1 complex, complex III, CIII) and cytochrome c oxidase (complex IV, CIV), that cooperate to transfer electrons derived from NADH and succinate to molecular oxygen, creating an electrochemical gradient over the inner membrane that drives transmembrane transport and the ATP synthase. Cytochrome c oxidase is the component of the respiratory chain that catalyzes the reduction of oxygen to water. Electrons originating from reduced cytochrome c in the intermembrane space (IMS) are transferred via the dinuclear copper A center (CU(A)) of subunit 2 and heme A of subunit 1 to the active site in subunit 1, a binuclear center (BNC) formed by heme A3 and copper B (CU(B)). The BNC reduces molecular oxygen to 2 water molecules using 4 electrons from cytochrome c in the IMS and 4 protons from the mitochondrial matrix. The polypeptide is Cytochrome c oxidase subunit 6B2 (Cox6b2) (Rattus norvegicus (Rat)).